Consider the following 186-residue polypeptide: Large ribosomal subunit protein uL10 (186 aa).

Part of the ribosomal stalk of the 50S ribosomal subunit. The N-terminus interacts with L11 and the large rRNA to form the base of the stalk. The C-terminus forms an elongated spine to which L12 dimers bind in a sequential fashion forming a multimeric L10(L12)X complex.

Forms part of the ribosomal stalk, playing a central role in the interaction of the ribosome with GTP-bound translation factors. This chain is Large ribosomal subunit protein uL10, found in Rhodopseudomonas palustris (strain ATCC BAA-98 / CGA009).